The chain runs to 387 residues: 4-hydroxy-3-methylbut-2-en-1-yl diphosphate synthase (flavodoxin) (387 aa).

[4Fe-4S] cluster contacts are provided by Cys280, Cys283, Cys315, and Glu322.

This sequence belongs to the IspG family. It depends on [4Fe-4S] cluster as a cofactor.

It catalyses the reaction (2E)-4-hydroxy-3-methylbut-2-enyl diphosphate + oxidized [flavodoxin] + H2O + 2 H(+) = 2-C-methyl-D-erythritol 2,4-cyclic diphosphate + reduced [flavodoxin]. It participates in isoprenoid biosynthesis; isopentenyl diphosphate biosynthesis via DXP pathway; isopentenyl diphosphate from 1-deoxy-D-xylulose 5-phosphate: step 5/6. Converts 2C-methyl-D-erythritol 2,4-cyclodiphosphate (ME-2,4cPP) into 1-hydroxy-2-methyl-2-(E)-butenyl 4-diphosphate. The chain is 4-hydroxy-3-methylbut-2-en-1-yl diphosphate synthase (flavodoxin) from Mycobacterium bovis (strain ATCC BAA-935 / AF2122/97).